Reading from the N-terminus, the 230-residue chain is Dephospho-CoA kinase (230 aa).

The tract at residues 1 to 21 (MSKYAAAPSPYSHQPQTPEHK) is disordered. The DPCK domain maps to 26-225 (VVGLTGGIGS…QDYLKLAQQL (200 aa)). 34-39 (GSGKSA) serves as a coordination point for ATP.

It belongs to the CoaE family.

It localises to the cytoplasm. The catalysed reaction is 3'-dephospho-CoA + ATP = ADP + CoA + H(+). The protein operates within cofactor biosynthesis; coenzyme A biosynthesis; CoA from (R)-pantothenate: step 5/5. In terms of biological role, catalyzes the phosphorylation of the 3'-hydroxyl group of dephosphocoenzyme A to form coenzyme A. This chain is Dephospho-CoA kinase, found in Psychrobacter cryohalolentis (strain ATCC BAA-1226 / DSM 17306 / VKM B-2378 / K5).